We begin with the raw amino-acid sequence, 40 residues long: Beta-defensin 1 (40 aa).

3 disulfide bridges follow: Cys7–Cys35, Cys14–Cys29, and Cys19–Cys36. Gly40 bears the Glycine amide mark.

In terms of assembly, monomer. Homodimer.

It is found in the secreted. It localises to the membrane. In terms of biological role, has antimicrobial activity against the Gram-positive bacteria methicillin-resistant S.aureus ATCC 33591 and L.monocytogenes EGD, the Gram-negative bacterium E.coli ML53p and the yeast C.albicans 820. Has no hemolytic activity towards human erythrocytes. The polypeptide is Beta-defensin 1 (Emys orbicularis (European pond turtle)).